Consider the following 539-residue polypeptide: Putative cysteine ligase BshC (539 aa).

Residues serine 146 and 384 to 386 (ERH) each bind ADP. Residues 455-475 (LLKNAAFIQDQLQFLERTVMK) are a coiled coil. Residues 490–493 (RIQN), tryptophan 506, and tyrosine 510 contribute to the ADP site.

The protein belongs to the BshC family. As to quaternary structure, homodimer in solution.

In terms of biological role, involved in bacillithiol (BSH) biosynthesis. May catalyze the last step of the pathway, the addition of cysteine to glucosamine malate (GlcN-Mal) to generate BSH. The protein is Putative cysteine ligase BshC of Bacillus subtilis (strain 168).